Consider the following 387-residue polypeptide: 3-ketoacyl-CoA thiolase (387 aa).

Catalysis depends on Cys91, which acts as the Acyl-thioester intermediate. Catalysis depends on proton acceptor residues His343 and Cys373.

This sequence belongs to the thiolase-like superfamily. Thiolase family. Heterotetramer of two alpha chains (FadB) and two beta chains (FadA).

The protein localises to the cytoplasm. The catalysed reaction is an acyl-CoA + acetyl-CoA = a 3-oxoacyl-CoA + CoA. It participates in lipid metabolism; fatty acid beta-oxidation. Its function is as follows. Catalyzes the final step of fatty acid oxidation in which acetyl-CoA is released and the CoA ester of a fatty acid two carbons shorter is formed. In Salmonella paratyphi A (strain ATCC 9150 / SARB42), this protein is 3-ketoacyl-CoA thiolase.